The sequence spans 283 residues: Glutamate racemase (283 aa).

Substrate contacts are provided by residues 28–29 (DS) and 60–61 (YG). Cys-92 acts as the Proton donor/acceptor in catalysis. 93–94 (NT) serves as a coordination point for substrate. The Proton donor/acceptor role is filled by Cys-204. 205–206 (TH) contacts substrate.

It belongs to the aspartate/glutamate racemases family.

The catalysed reaction is L-glutamate = D-glutamate. It functions in the pathway cell wall biogenesis; peptidoglycan biosynthesis. Its function is as follows. Provides the (R)-glutamate required for cell wall biosynthesis. This Salmonella choleraesuis (strain SC-B67) protein is Glutamate racemase.